A 291-amino-acid polypeptide reads, in one-letter code: tRNA U34 carboxymethyltransferase (291 aa).

Carboxy-S-adenosyl-L-methionine-binding positions include Lys61, Trp75, Lys80, Gly100, Asp122 to Ser124, Val149 to Glu150, Tyr169, and Arg284.

It belongs to the class I-like SAM-binding methyltransferase superfamily. CmoB family. In terms of assembly, homotetramer.

The catalysed reaction is carboxy-S-adenosyl-L-methionine + 5-hydroxyuridine(34) in tRNA = 5-carboxymethoxyuridine(34) in tRNA + S-adenosyl-L-homocysteine + H(+). Functionally, catalyzes carboxymethyl transfer from carboxy-S-adenosyl-L-methionine (Cx-SAM) to 5-hydroxyuridine (ho5U) to form 5-carboxymethoxyuridine (cmo5U) at position 34 in tRNAs. This is tRNA U34 carboxymethyltransferase from Campylobacter jejuni subsp. doylei (strain ATCC BAA-1458 / RM4099 / 269.97).